The sequence spans 382 residues: Queuine tRNA-ribosyltransferase (382 aa).

Asp-93 acts as the Proton acceptor in catalysis. Residues 93 to 97 (DSGGF), Asp-147, Gln-191, and Gly-218 contribute to the substrate site. Residues 249-255 (GVGKPED) form an RNA binding region. Catalysis depends on Asp-268, which acts as the Nucleophile. Residues 273-277 (TRNAR) form an RNA binding; important for wobble base 34 recognition region. Residues Cys-306, Cys-308, Cys-311, and His-337 each coordinate Zn(2+).

Belongs to the queuine tRNA-ribosyltransferase family. Homodimer. Within each dimer, one monomer is responsible for RNA recognition and catalysis, while the other monomer binds to the replacement base PreQ1. Requires Zn(2+) as cofactor.

It catalyses the reaction 7-aminomethyl-7-carbaguanine + guanosine(34) in tRNA = 7-aminomethyl-7-carbaguanosine(34) in tRNA + guanine. The protein operates within tRNA modification; tRNA-queuosine biosynthesis. In terms of biological role, catalyzes the base-exchange of a guanine (G) residue with the queuine precursor 7-aminomethyl-7-deazaguanine (PreQ1) at position 34 (anticodon wobble position) in tRNAs with GU(N) anticodons (tRNA-Asp, -Asn, -His and -Tyr). Catalysis occurs through a double-displacement mechanism. The nucleophile active site attacks the C1' of nucleotide 34 to detach the guanine base from the RNA, forming a covalent enzyme-RNA intermediate. The proton acceptor active site deprotonates the incoming PreQ1, allowing a nucleophilic attack on the C1' of the ribose to form the product. After dissociation, two additional enzymatic reactions on the tRNA convert PreQ1 to queuine (Q), resulting in the hypermodified nucleoside queuosine (7-(((4,5-cis-dihydroxy-2-cyclopenten-1-yl)amino)methyl)-7-deazaguanosine). In Haemophilus influenzae (strain ATCC 51907 / DSM 11121 / KW20 / Rd), this protein is Queuine tRNA-ribosyltransferase.